Reading from the N-terminus, the 217-residue chain is Ras-related protein Rab-19 (217 aa).

Residues Ser-26, Val-28, Gly-29, Lys-30, Thr-31, Cys-32, Tyr-42, Thr-43, Glu-44, Thr-45, and Thr-49 each coordinate GTP. Residue Thr-31 participates in Mg(2+) binding. Residues Ser-39–Phe-54 carry the Switch 1 motif. Mg(2+)-binding residues include Thr-49 and Asp-72. A Switch 2 motif is present at residues Ala-74–Ser-89. The GTP site is built by Gly-75, Asn-130, Lys-131, Asp-133, Ser-161, Ala-162, and Lys-163. 2 S-geranylgeranyl cysteine lipidation sites follow: Cys-215 and Cys-217. The residue at position 217 (Cys-217) is a Cysteine methyl ester.

Belongs to the small GTPase superfamily. Rab family. It depends on Mg(2+) as a cofactor.

The protein localises to the cell membrane. The enzyme catalyses GTP + H2O = GDP + phosphate + H(+). With respect to regulation, regulated by guanine nucleotide exchange factors (GEFs) which promote the exchange of bound GDP for free GTP. Regulated by GTPase activating proteins (GAPs) which increase the GTP hydrolysis activity. Inhibited by GDP dissociation inhibitors (GDIs). Functionally, the small GTPases Rab are key regulators of intracellular membrane trafficking, from the formation of transport vesicles to their fusion with membranes. Rabs cycle between an inactive GDP-bound form and an active GTP-bound form that is able to recruit to membranes different set of downstream effectors directly responsible for vesicle formation, movement, tethering and fusion. The protein is Ras-related protein Rab-19 of Homo sapiens (Human).